Reading from the N-terminus, the 145-residue chain is Large ribosomal subunit protein uL15 (145 aa).

Over residues 1–13 (MNLHELKYNEGAR) the composition is skewed to basic and acidic residues. Residues 1–56 (MNLHELKYNEGARKEKHRVGRGHAAGKGKQAGKGQSGQLKRTGSKPGFEGGQNPWY) are disordered. A compositionally biased stretch (basic residues) spans 14 to 26 (KEKHRVGRGHAAG).

This sequence belongs to the universal ribosomal protein uL15 family. Part of the 50S ribosomal subunit.

Binds to the 23S rRNA. The protein is Large ribosomal subunit protein uL15 of Mycoplasma mobile (strain ATCC 43663 / 163K / NCTC 11711) (Mesomycoplasma mobile).